A 470-amino-acid chain; its full sequence is Sulfate adenylyltransferase subunit 1 (470 aa).

The tr-type G domain occupies 22–238 (KELLRFITCG…ETIKIDYAYT (217 aa)). Residues 31–38 (GSVDDGKS) form a G1 region. 31–38 (GSVDDGKS) serves as a coordination point for GTP. Residues 89–93 (GITID) form a G2 region. A G3 region spans residues 110–113 (DTPG). Residues 110 to 114 (DTPGH) and 165 to 168 (NKMD) each bind GTP. The G4 stretch occupies residues 165–168 (NKMD). The tract at residues 202-204 (SAL) is G5.

This sequence belongs to the TRAFAC class translation factor GTPase superfamily. Classic translation factor GTPase family. CysN/NodQ subfamily. As to quaternary structure, heterodimer composed of CysD, the smaller subunit, and CysN.

It carries out the reaction sulfate + ATP + H(+) = adenosine 5'-phosphosulfate + diphosphate. Its pathway is sulfur metabolism; hydrogen sulfide biosynthesis; sulfite from sulfate: step 1/3. Its function is as follows. With CysD forms the ATP sulfurylase (ATPS) that catalyzes the adenylation of sulfate producing adenosine 5'-phosphosulfate (APS) and diphosphate, the first enzymatic step in sulfur assimilation pathway. APS synthesis involves the formation of a high-energy phosphoric-sulfuric acid anhydride bond driven by GTP hydrolysis by CysN coupled to ATP hydrolysis by CysD. The sequence is that of Sulfate adenylyltransferase subunit 1 from Francisella tularensis subsp. tularensis (strain SCHU S4 / Schu 4).